Consider the following 443-residue polypeptide: Deoxyguanosinetriphosphate triphosphohydrolase-like protein (443 aa).

An HD domain is found at 66–259; it reads RLTHSLEAAQ…MELADDIAYG (194 aa).

The protein belongs to the dGTPase family. Type 2 subfamily.

The polypeptide is Deoxyguanosinetriphosphate triphosphohydrolase-like protein (Vibrio vulnificus (strain CMCP6)).